We begin with the raw amino-acid sequence, 354 residues long: Photosystem II D2 protein (354 aa).

Threonine 2 is subject to N-acetylthreonine. A Phosphothreonine modification is found at threonine 2. A helical transmembrane segment spans residues 42 to 62 (CAYFALGGFFTGNTFVTSWYT). Residue histidine 119 participates in chlorophyll a binding. Residues 126 to 142 (GFMLRQFEIARAVKIRP) traverse the membrane as a helical segment. Pheophytin a contacts are provided by glutamine 131 and asparagine 144. Residues 154–167 (VFVSVFLIYPLGQQ) form a helical membrane-spanning segment. Histidine 199 is a binding site for chlorophyll a. A helical membrane pass occupies residues 209-229 (AALLCAIHGATVENTLFEDGD). Residues histidine 216 and phenylalanine 263 each coordinate a plastoquinone. Histidine 216 contacts Fe cation. A Fe cation-binding site is contributed by histidine 270. A helical transmembrane segment spans residues 280–296 (GLWMSAIGVVGLALNLR).

The protein belongs to the reaction center PufL/M/PsbA/D family. In terms of assembly, PSII is composed of 1 copy each of membrane proteins PsbA, PsbB, PsbC, PsbD, PsbE, PsbF, PsbH, PsbI, PsbJ, PsbK, PsbL, PsbM, PsbT, PsbX, PsbY, PsbZ, Psb30/Ycf12, at least 3 peripheral proteins of the oxygen-evolving complex and a large number of cofactors. It forms dimeric complexes. The D1/D2 heterodimer binds P680, chlorophylls that are the primary electron donor of PSII, and subsequent electron acceptors. It shares a non-heme iron and each subunit binds pheophytin, quinone, additional chlorophylls, carotenoids and lipids. There is also a Cl(-1) ion associated with D1 and D2, which is required for oxygen evolution. The PSII complex binds additional chlorophylls, carotenoids and specific lipids. serves as cofactor.

The protein localises to the plastid. It is found in the chloroplast thylakoid membrane. The catalysed reaction is 2 a plastoquinone + 4 hnu + 2 H2O = 2 a plastoquinol + O2. Functionally, photosystem II (PSII) is a light-driven water:plastoquinone oxidoreductase that uses light energy to abstract electrons from H(2)O, generating O(2) and a proton gradient subsequently used for ATP formation. It consists of a core antenna complex that captures photons, and an electron transfer chain that converts photonic excitation into a charge separation. The D1/D2 (PsbA/PsbD) reaction center heterodimer binds P680, the primary electron donor of PSII as well as several subsequent electron acceptors. D2 is needed for assembly of a stable PSII complex. The sequence is that of Photosystem II D2 protein from Mesostigma viride (Green alga).